A 123-amino-acid polypeptide reads, in one-letter code: Large ribosomal subunit protein uL29 (123 aa).

The protein belongs to the universal ribosomal protein uL29 family.

This Theileria parva (East coast fever infection agent) protein is Large ribosomal subunit protein uL29 (RPL35).